Consider the following 372-residue polypeptide: L-selectin (372 aa).

A signal peptide spans 1–28; the sequence is MIFPWKCQSTQRDLWNIFKLWGWTMLCC. Residues 29-38 constitute a propeptide that is removed on maturation; the sequence is DFLAHHGTDC. Residues 39–332 lie on the Extracellular side of the membrane; it reads WTYHYSEKPM…FSMIKEGDYN (294 aa). The region spanning 55–155 is the C-type lectin domain; the sequence is RFCRDNYTDL…ACHKLKAALC (101 aa). Cystine bridges form between C57–C155, C128–C147, C128–C160, C160–C171, C165–C180, C182–C191, C197–C241, C227–C254, C259–C303, and C289–C316. N-linked (GlcNAc...) asparagine glycans are attached at residues N60 and N104. E118, N120, E126, N143, and D144 together coordinate Ca(2+). Residues 156–192 enclose the EGF-like domain; that stretch reads YTASCQPWSCSGHGECVEIINNYTCNCDVGYYGPQCQ. N177 carries an N-linked (GlcNAc...) asparagine glycan. Sushi domains follow at residues 195 to 256 and 257 to 318; these read IQCE…TCQV and IQCE…ICQK. N216, N232, N246, and N271 each carry an N-linked (GlcNAc...) asparagine glycan. The helical transmembrane segment at 333 to 355 threads the bilayer; it reads PLFIPVAVMVTAFSGLAFIIWLA. The Cytoplasmic portion of the chain corresponds to 356–372; the sequence is RRLKKGKKSKRSMDDPY.

This sequence belongs to the selectin/LECAM family. Interaction with SELPLG/PSGL1 and PODXL2 is required for promoting recruitment and rolling of leukocytes. This interaction is dependent on the sialyl Lewis X glycan modification of SELPLG and PODXL2, and tyrosine sulfation modifications of SELPLG. Sulfation on 'Tyr-51' of SELPLG is important for L-selectin binding. Post-translationally, N-glycosylated.

It is found in the cell membrane. Its function is as follows. Calcium-dependent lectin that mediates cell adhesion by binding to glycoproteins on neighboring cells. Mediates the adherence of lymphocytes to endothelial cells of high endothelial venules in peripheral lymph nodes. Promotes initial tethering and rolling of leukocytes in endothelia. This Pan troglodytes (Chimpanzee) protein is L-selectin (SELL).